The primary structure comprises 619 residues: Dihydroxy-acid dehydratase (619 aa).

D81 serves as a coordination point for Mg(2+). C122 lines the [2Fe-2S] cluster pocket. Mg(2+) is bound by residues D123 and K124. An N6-carboxylysine modification is found at K124. Residue C195 coordinates [2Fe-2S] cluster. E491 contacts Mg(2+). S517 (proton acceptor) is an active-site residue.

Belongs to the IlvD/Edd family. Homodimer. The cofactor is [2Fe-2S] cluster. Requires Mg(2+) as cofactor.

The enzyme catalyses (2R)-2,3-dihydroxy-3-methylbutanoate = 3-methyl-2-oxobutanoate + H2O. It carries out the reaction (2R,3R)-2,3-dihydroxy-3-methylpentanoate = (S)-3-methyl-2-oxopentanoate + H2O. It functions in the pathway amino-acid biosynthesis; L-isoleucine biosynthesis; L-isoleucine from 2-oxobutanoate: step 3/4. Its pathway is amino-acid biosynthesis; L-valine biosynthesis; L-valine from pyruvate: step 3/4. Functions in the biosynthesis of branched-chain amino acids. Catalyzes the dehydration of (2R,3R)-2,3-dihydroxy-3-methylpentanoate (2,3-dihydroxy-3-methylvalerate) into 2-oxo-3-methylpentanoate (2-oxo-3-methylvalerate) and of (2R)-2,3-dihydroxy-3-methylbutanoate (2,3-dihydroxyisovalerate) into 2-oxo-3-methylbutanoate (2-oxoisovalerate), the penultimate precursor to L-isoleucine and L-valine, respectively. The sequence is that of Dihydroxy-acid dehydratase from Rhodopseudomonas palustris (strain HaA2).